A 148-amino-acid polypeptide reads, in one-letter code: Calcium-regulated heat stable protein 1 (148 aa).

The span at 1–12 shows a compositional bias: pro residues; sequence MSSEPPPPPLQP. The interval 1–47 is disordered; the sequence is MSSEPPPPPLQPPTHQTSVGLLDTPRTRDRSPSPLRGNVVPSPLPTR. Position 2 is an N-acetylserine (serine 2). Residues serine 31, serine 33, and serine 42 each carry the phosphoserine modification. Phosphothreonine is present on threonine 46. Phosphoserine occurs at positions 53 and 59. The CSD domain maps to 63 to 130; the sequence is VYKGVCKCFC…KLQAVEVVIT (68 aa). Serine 147 is modified (phosphoserine).

Homodimer. Interacts with STYX. Can be phosphorylated by DYRK2 (in vitro). Dephosphorylated by calcineurin in a Ca(2+) dependent manner.

The protein resides in the cytoplasm. The protein localises to the P-body. It is found in the cytoplasmic granule. Its function is as follows. Binds mRNA and regulates the stability of target mRNA. The chain is Calcium-regulated heat stable protein 1 (Carhsp1) from Mus musculus (Mouse).